Consider the following 760-residue polypeptide: Armadillo-like helical domain-containing protein 4 (760 aa).

A signal peptide spans 1 to 27 (MSRPIVLHICLAFCSLLLLNFAAQCLA). Residues 28 to 700 (FPNLERREIV…KDKAGYMSGM (673 aa)) lie on the Extracellular side of the membrane. Disordered stretches follow at residues 49–69 (LNTD…SGDP), 117–143 (GEEV…LTNP), 216–243 (RTEK…TEPS), 373–392 (HGGE…PMGD), 474–495 (TRGE…DAPR), and 536–652 (NEEL…SQEP). Asn56 carries an N-linked (GlcNAc...) asparagine glycan. The span at 216–228 (RTEKFEANPEHKT) shows a compositional bias: basic and acidic residues. Over residues 380-390 (DQSSVTPTSPM) the composition is skewed to polar residues. Over residues 474–484 (TRGEDETKGGR) the composition is skewed to basic and acidic residues. The segment covering 594 to 635 (LESEEGEDDEDEEDEEEEDEEEEDEEEDEEDKDADSLDEALG) has biased composition (acidic residues). A helical transmembrane segment spans residues 701 to 721 (LVPVGVGIAGALFILGALYSI). Residues 722 to 760 (KVMNRRRRNGFKRHKRKQREFNSMQDRVMLLADSSEDEF) are Cytoplasmic-facing. Phosphoserine is present on residues Ser755 and Ser756.

As to quaternary structure, interacts with IL6ST; this interaction prevents IL6ST protein homodimerization and bridges ARMH4 with IL6R and STAT3 and therefore inhibits phosphorylation of STAT3 at 'Tyr-705'. Interacts (via cytoplasmic tail) with RICTOR; this interaction bridges ARMH4 to the mTORC2 complex and inhibits the mTORC2 kinase activity.

Its subcellular location is the membrane. In terms of biological role, may modulate immune response and may play a role in inflammation. Down-modulates STAT3 signaling throught direct interaction with IL6ST, resulting in the inhibition of phosphorylation of STAT3 at Tyr-705. May negatively regulates AKT signaling by modulating the activity of mTORC2 complex through RICTOR interaction. The polypeptide is Armadillo-like helical domain-containing protein 4 (Bos taurus (Bovine)).